A 529-amino-acid polypeptide reads, in one-letter code: DnaJ homolog l(2)tid, mitochondrial (529 aa).

A mitochondrion-targeting transit peptide spans Met1–Tyr22. Arg35 bears the Omega-N-methylarginine mark. The region spanning Asp80 to Gly145 is the J domain. Lys121 is modified (N6-acetyllysine). The segment at Gly230–Arg308 adopts a CR-type zinc-finger fold. Zn(2+)-binding residues include Cys243, Cys246, Cys260, Cys263, Cys282, Cys285, Cys296, and Cys299. One copy of the CXXCXGXG motif; approximate repeat lies at Cys243 to Lys250. The stretch at Cys260–Gly267 is one CXXCXGXG motif repeat. The stretch at Cys282–Arg289 is one CXXCXGXG motif; approximate repeat. The CXXCXGXG motif repeat unit spans residues Cys296–Gly303. The disordered stretch occupies residues Thr441 to Asn529. A compositionally biased stretch (basic and acidic residues) spans Gln497 to Gln508.

Its subcellular location is the mitochondrion outer membrane. May act as a tumor suppressor in larval imaginal disks. The chain is DnaJ homolog l(2)tid, mitochondrial (l(2)tid) from Drosophila virilis (Fruit fly).